A 1027-amino-acid polypeptide reads, in one-letter code: MDLNGDAGAKRKRSSIVPAERPAKHLKPESSALTPGDSTPANGTVYDIEDEDDASRLLPIGPAQADSPEWQATIEEVVKSVVSIHFCQTCSFDTELSMSSQATGFVVDAERGYILTNRHVVCPGPFWGYCIFDNHEECDVRPVYRDPVHDFGILKFDPKAIRYMNLTELKLQPDAARVGSEIRVVGNDAGEKLSILSGVISRLDRNAPEYGEGYSDFNTNYIQAAAAASGGSSGSPVVNIDGHAIALQAGGRADGAATDYFLPLDRPLRALECIRRGEPVTRGTIQTQWILKPFDECRRLGLTPEWEATVRKAAPTETSMLVAEIILPEGPADGKLEEGDVLLQVNGELLTQFIRLDDILDSSVGQTVRLLVQRGGQDVEIECQVGDLHAITPDRFVTVAGGTFHDLSYQQSRLYAIATRGVYVCEAAGSFKLENTLSGWLIDSVDKRPTRNLDEFVEVMKTIPDRSRVVISYRHIRDLHTRGTSIVYIDRHWHPKMRLAVRNDETGLWDFSDLADALPALPPVPRKADFIQLDGVSQPAASEIVRSFVRVSCTMPLKLDGYPQAKKTGFGLVVDAEKGLVVVSRAIVPYDLCDINITVADSIIVNAKVVFLHPLQNYTIIQYDPSLVQAPVQSAKLSTEYIKQGQDTIFVGFNQNFRIVVAKTAVTDITTVSIPANASAPRYRAINLDAVTVDTGLSGQCSNGVLIGEDGVVQALWLNYLGERTPSSHKDVEYHLGFATPSLLPVVSKIQQGVMPELRILNMESYVVQMSQARIMGVSEEWIEKVTQANPSRHQLFMVRKVDCPPAGFDNMADTFQEGDILLTLDGQLITRVSELDVMYDKEFLEALIVRNGQEMRIQVPTVPTADLETDRAVVFCGAVLQKPHHAVRQQISKLHSEIYVSARSRGSPSYQYGLSPTNFITAVNGVPTPDLDRFVKEVSKIPDNTYFRLRAVTFDNVPWVVTMKKNDHYFPMSEYLKDPSQPCGWRTVSHNKSKHKDGIAPDAANLNPDAMEQGYDGASDIEPEAE.

The segment at 1–46 (MDLNGDAGAKRKRSSIVPAERPAKHLKPESSALTPGDSTPANGTVY) is disordered. Residues 31 to 42 (SALTPGDSTPAN) are compositionally biased toward polar residues. Residues 81-265 (VVSIHFCQTC…AATDYFLPLD (185 aa)) are serine protease. Active-site charge relay system residues include His119, Asp150, and Ser232. PDZ domains follow at residues 288-373 (QWIL…LLVQ) and 875-956 (VFCG…VTFD). A disordered region spans residues 991 to 1027 (HNKSKHKDGIAPDAANLNPDAMEQGYDGASDIEPEAE).

The protein belongs to the peptidase S1C family.

It localises to the nucleus. In terms of biological role, nuclear serine protease which mediates apoptosis. The protein is Pro-apoptotic serine protease nma111 (nma111) of Aspergillus oryzae (strain ATCC 42149 / RIB 40) (Yellow koji mold).